A 783-amino-acid polypeptide reads, in one-letter code: Serine/threonine-protein kinase SIK1 (783 aa).

A Protein kinase domain is found at 27–278; sequence YDIERTLGKG…IAQIRQHRWM (252 aa). ATP is bound by residues 33–41 and lysine 56; that span reads LGKGNFAVV. The Proton acceptor role is filled by aspartate 149. At threonine 182 the chain carries Phosphothreonine; by LKB1 and GSK3-beta. Serine 186 carries the phosphoserine; by autocatalysis modification. Residues 303-343 form the UBA domain; it reads DYDEQALGIMQTLGVDRQRTVESLQNSSYNHFAAIYYLLLE. Threonine 322 carries the phosphothreonine; by CaMK1 modification. Disordered stretches follow at residues 353-377 and 449-477; these read CARP…VPQE and RQGP…LAEV. The residue at position 473 (threonine 473) is a Phosphothreonine; by PKA. Serine 575 bears the Phosphoserine; by PKA mark. The interval 583-612 is RK-rich region; required for cAMP responsiveness and nuclear localization; the sequence is LKAFRQQLRKTTRTKGFLGLNKIKGLARQV. The segment at 619 to 643 is disordered; sequence RASRGGLSPFHAPAQSPGLHGGAAG.

The protein belongs to the protein kinase superfamily. CAMK Ser/Thr protein kinase family. AMPK subfamily. As to quaternary structure, interacts with ATP1A1. Interacts (when phosphorylated on Thr-182 and Ser-186) with YWHAZ. Interacts (when phosphorylated at Thr-473 and/or Ser-575) with 14-3-3 proteins; the interaction inhibits kinase activity towards TORCs. There is a cooperative effect of the phosphorylation sites in 14-3-3 binding as the interaction is stronger when both Thr-473 and Ser-575 are modified. Mg(2+) is required as a cofactor. Phosphorylated at Thr-182 by STK11/LKB1 in complex with STE20-related adapter-alpha (STRADA) pseudo kinase and CAB39, leading to its activation. Phosphorylation at Thr-182 promotes autophosphorylation at Ser-186, which is required for sustained activity. Autophosphorylation at Ser-186 is maintained by sequential phosphorylation at Thr-182 by GSK3-beta. GSK3-beta cannot initiate phosphorylation at Thr-182, it can only maintain it. Phosphorylation at Ser-575 in response to cAMP signaling promotes translocation to the cytoplasm. Phosphorylation at Thr-322 by CaMK1 following intracellular sodium concentration leads to activation.

The protein resides in the cytoplasm. Its subcellular location is the nucleus. The enzyme catalyses L-seryl-[protein] + ATP = O-phospho-L-seryl-[protein] + ADP + H(+). The catalysed reaction is L-threonyl-[protein] + ATP = O-phospho-L-threonyl-[protein] + ADP + H(+). With respect to regulation, activated by phosphorylation on Thr-182. Also activated by phosphorylation on Thr-322 in response to increases in intracellular sodium in parallel with elevations in intracellular calcium through the reversible sodium/calcium exchanger. Inhibited by phosphorylation at Thr-473 and Ser-575, probably by PKA, which triggers interaction with 14-3-3 proteins. In terms of biological role, serine/threonine-protein kinase involved in various processes such as cell cycle regulation, gluconeogenesis and lipogenesis regulation, muscle growth and differentiation and tumor suppression. Phosphorylates HDAC4, HDAC5, PPME1, SREBF1, CRTC1/TORC1. Inhibits CREB activity by phosphorylating and inhibiting activity of TORCs, the CREB-specific coactivators, like CRTC2/TORC2 and CRTC3/TORC3 in response to cAMP signaling. Acts as a tumor suppressor and plays a key role in p53/TP53-dependent anoikis, a type of apoptosis triggered by cell detachment: required for phosphorylation of p53/TP53 in response to loss of adhesion and is able to suppress metastasis. Part of a sodium-sensing signaling network, probably by mediating phosphorylation of PPME1: following increases in intracellular sodium, SIK1 is activated by CaMK1 and phosphorylates PPME1 subunit of protein phosphatase 2A (PP2A), leading to dephosphorylation of sodium/potassium-transporting ATPase ATP1A1 and subsequent increase activity of ATP1A1. Acts as a regulator of muscle cells by phosphorylating and inhibiting class II histone deacetylases HDAC4 and HDAC5, leading to promote expression of MEF2 target genes in myocytes. Also required during cardiomyogenesis by regulating the exit of cardiomyoblasts from the cell cycle via down-regulation of CDKN1C/p57Kip2. Acts as a regulator of hepatic gluconeogenesis by phosphorylating and repressing the CREB-specific coactivators CRTC1/TORC1 and CRTC2/TORC2, leading to inhibit CREB activity. Also regulates hepatic lipogenesis by phosphorylating and inhibiting SREBF1. In concert with CRTC1/TORC1, regulates the light-induced entrainment of the circadian clock by attenuating PER1 induction; represses CREB-mediated transcription of PER1 by phosphorylating and deactivating CRTC1/TORC1. This Homo sapiens (Human) protein is Serine/threonine-protein kinase SIK1 (SIK1).